A 209-amino-acid polypeptide reads, in one-letter code: Large ribosomal subunit protein uL3 (209 aa).

An N5-methylglutamine modification is found at Gln150.

This sequence belongs to the universal ribosomal protein uL3 family. As to quaternary structure, part of the 50S ribosomal subunit. Forms a cluster with proteins L14 and L19. In terms of processing, methylated by PrmB.

Functionally, one of the primary rRNA binding proteins, it binds directly near the 3'-end of the 23S rRNA, where it nucleates assembly of the 50S subunit. The protein is Large ribosomal subunit protein uL3 of Vibrio vulnificus (strain CMCP6).